A 90-amino-acid chain; its full sequence is Bombyxin G-1 (90 aa).

A signal peptide spans 1-19; the sequence is MKLIIFVVFCITIYGSTSG. 3 disulfide bridges follow: C28–C77, C40–C90, and C76–C81. Positions 49–67 are cleaved as a propeptide — c peptide like; sequence NTQYEGYHWPLLAYSEERI.

This sequence belongs to the insulin family. As to quaternary structure, heterodimer of a B chain and an A chain linked by two disulfide bonds.

Its subcellular location is the secreted. The polypeptide is Bombyxin G-1 (BBXG1) (Bombyx mori (Silk moth)).